The primary structure comprises 332 residues: 4-hydroxy-3-methylbut-2-enyl diphosphate reductase (332 aa).

Cys-13 serves as a coordination point for [4Fe-4S] cluster. Residues His-41 and His-75 each contribute to the (2E)-4-hydroxy-3-methylbut-2-enyl diphosphate site. Residues His-41 and His-75 each coordinate dimethylallyl diphosphate. Isopentenyl diphosphate-binding residues include His-41 and His-75. Cys-97 is a binding site for [4Fe-4S] cluster. Residue His-125 coordinates (2E)-4-hydroxy-3-methylbut-2-enyl diphosphate. His-125 lines the dimethylallyl diphosphate pocket. Isopentenyl diphosphate is bound at residue His-125. The active-site Proton donor is the Glu-127. Thr-168 contacts (2E)-4-hydroxy-3-methylbut-2-enyl diphosphate. Residue Cys-229 participates in [4Fe-4S] cluster binding. (2E)-4-hydroxy-3-methylbut-2-enyl diphosphate contacts are provided by Ser-257, Ser-258, Asn-259, and Ser-306. Residues Ser-257, Ser-258, Asn-259, and Ser-306 each coordinate dimethylallyl diphosphate. 4 residues coordinate isopentenyl diphosphate: Ser-257, Ser-258, Asn-259, and Ser-306.

Belongs to the IspH family. It depends on [4Fe-4S] cluster as a cofactor.

The catalysed reaction is isopentenyl diphosphate + 2 oxidized [2Fe-2S]-[ferredoxin] + H2O = (2E)-4-hydroxy-3-methylbut-2-enyl diphosphate + 2 reduced [2Fe-2S]-[ferredoxin] + 2 H(+). It catalyses the reaction dimethylallyl diphosphate + 2 oxidized [2Fe-2S]-[ferredoxin] + H2O = (2E)-4-hydroxy-3-methylbut-2-enyl diphosphate + 2 reduced [2Fe-2S]-[ferredoxin] + 2 H(+). It participates in isoprenoid biosynthesis; dimethylallyl diphosphate biosynthesis; dimethylallyl diphosphate from (2E)-4-hydroxy-3-methylbutenyl diphosphate: step 1/1. The protein operates within isoprenoid biosynthesis; isopentenyl diphosphate biosynthesis via DXP pathway; isopentenyl diphosphate from 1-deoxy-D-xylulose 5-phosphate: step 6/6. Catalyzes the conversion of 1-hydroxy-2-methyl-2-(E)-butenyl 4-diphosphate (HMBPP) into a mixture of isopentenyl diphosphate (IPP) and dimethylallyl diphosphate (DMAPP). Acts in the terminal step of the DOXP/MEP pathway for isoprenoid precursor biosynthesis. This chain is 4-hydroxy-3-methylbut-2-enyl diphosphate reductase, found in Chlorobaculum tepidum (strain ATCC 49652 / DSM 12025 / NBRC 103806 / TLS) (Chlorobium tepidum).